The chain runs to 112 residues: Transmembrane protein 14C (112 aa).

A run of 4 helical transmembrane segments spans residues 7 to 27, 32 to 52, 62 to 82, and 88 to 108; these read VVPLHWFGFGYAALVASGGII, AGSVPSLAAGLLFGSLAGLGA, VWVFLATSGTLAGIMGMRFYH, and PAGLIAGASLLMVAKVGVSMF.

It belongs to the TMEM14 family.

The protein localises to the mitochondrion membrane. Functionally, required for normal heme biosynthesis. This is Transmembrane protein 14C (TMEM14C) from Homo sapiens (Human).